The chain runs to 68 residues: Large ribosomal subunit protein bL32 (68 aa).

The segment at 1 to 24 is disordered; the sequence is MAVPQNRVTRSRRNMRRSHDALVA.

The protein belongs to the bacterial ribosomal protein bL32 family.

This is Large ribosomal subunit protein bL32 from Paracoccus denitrificans (strain Pd 1222).